The following is a 1100-amino-acid chain: Exportin-T (1100 aa).

This sequence belongs to the exportin family. In terms of assembly, interacts with CEX1, GSP1, GSP2, NSP1, NUP2 and UTP8.

It is found in the nucleus. Its subcellular location is the cytoplasm. Functionally, tRNA nucleus export receptor which facilitates tRNA translocation across the nuclear pore complex. Preferentially interacts with tRNAs with mature 5'- and 3'-termini and does not distinguish between intron-containing and spliced tRNAs. In the nucleus binds to tRNA and to the Ran-GTPases GSP1 or GSP2 in their active GTP-bound form. Docking of this trimeric complex to the nuclear pore complex (NPC) is mediated through binding to nucleoporins. Upon transit of a nuclear export complex into the cytoplasm, disassembling of the complex and hydrolysis of Ran-GTP to Ran-GDP cause release of the tRNA from the export receptor. The directionality of nuclear export is thought to be conferred by an asymmetric distribution of the GTP- and GDP-bound forms of Ran between the cytoplasm and nucleus. This chain is Exportin-T (LOS1), found in Saccharomyces cerevisiae (strain ATCC 204508 / S288c) (Baker's yeast).